We begin with the raw amino-acid sequence, 510 residues long: MSKKSVKARVIKASPPTESTKQIYEDEFADSYDSNILPPPYNLKELKMIAEYSTILQQCVDAYRTNIVGFGFDFEYSFDVNSPDVTNEEKTEAESEWTKLEEFVKYLHFDESAETLLGFVIEDREKTGNGFIEVIRNGENKPAGIEYMDVQNVRVCKLSEPIEVDFTYFEQGQMKSIKREKRFRKYVQMIDGRMVYFKEYGDPRTLNLETGQYDEQTPLEKRANEVVHFKIGSGIYGKPRWIGHIVNLYGARKAEELNFMYFKQGRHIPAAITIENGMLSEDSYTQLQDYMNGLEGVENAHKFLLLEAEGIAKGKNIHGDEEIAPVKVDIKSLAEILQEDALFLEYDQKNRDKIRSAFRLPPLYTGEAQDYNRATADTARKITEEQVFQPERKLITGKLNALFLNDLEIHKVRLQLKGPDFRDPLEIAKVLTPFITAGAVSPNDLRDLAGRVLGKTLEEWPEEEYNRPLGKTNESSVSDPLAALFKSKNGTPNMIGLLKDMRDVLEDLKR.

It belongs to the phage portal family. PBSX subfamily.

This is an uncharacterized protein from Bacillus subtilis (strain 168).